The sequence spans 728 residues: Elongation factor 2 (728 aa).

The tr-type G domain occupies Lys-18–Ile-258. Residues Ala-27 to Thr-34, Asp-93 to His-97, and Asn-147 to Asp-150 contribute to the GTP site. His-594 carries the post-translational modification Diphthamide.

This sequence belongs to the TRAFAC class translation factor GTPase superfamily. Classic translation factor GTPase family. EF-G/EF-2 subfamily.

It is found in the cytoplasm. Functionally, catalyzes the GTP-dependent ribosomal translocation step during translation elongation. During this step, the ribosome changes from the pre-translocational (PRE) to the post-translocational (POST) state as the newly formed A-site-bound peptidyl-tRNA and P-site-bound deacylated tRNA move to the P and E sites, respectively. Catalyzes the coordinated movement of the two tRNA molecules, the mRNA and conformational changes in the ribosome. In Archaeoglobus fulgidus (strain ATCC 49558 / DSM 4304 / JCM 9628 / NBRC 100126 / VC-16), this protein is Elongation factor 2 (fusA).